The following is a 234-amino-acid chain: Transcriptional activator protein TraR (234 aa).

The 66-residue stretch at 167–232 (TAEDAAWLDP…HLTALAIKRK (66 aa)) folds into the HTH luxR-type domain. A DNA-binding region (H-T-H motif) is located at residues 191 to 210 (MEEIADVEEVKYNSVRVKLR).

Belongs to the autoinducer-regulated transcriptional regulatory protein family.

Positive regulation of conjugal transfer of Ti plasmids. This Agrobacterium vitis (Rhizobium vitis) protein is Transcriptional activator protein TraR (traR).